The primary structure comprises 283 residues: Pantothenate synthetase (283 aa).

ATP is bound at residue Met-33–His-40. His-40 functions as the Proton donor in the catalytic mechanism. Gln-64 is a (R)-pantoate binding site. Gln-64 is a beta-alanine binding site. Gly-150–Asp-153 lines the ATP pocket. Gln-156 is a binding site for (R)-pantoate. Residues Ile-179 and Met-187–Arg-190 each bind ATP.

This sequence belongs to the pantothenate synthetase family. As to quaternary structure, homodimer.

Its subcellular location is the cytoplasm. It catalyses the reaction (R)-pantoate + beta-alanine + ATP = (R)-pantothenate + AMP + diphosphate + H(+). It participates in cofactor biosynthesis; (R)-pantothenate biosynthesis; (R)-pantothenate from (R)-pantoate and beta-alanine: step 1/1. Catalyzes the condensation of pantoate with beta-alanine in an ATP-dependent reaction via a pantoyl-adenylate intermediate. This chain is Pantothenate synthetase, found in Mesorhizobium japonicum (strain LMG 29417 / CECT 9101 / MAFF 303099) (Mesorhizobium loti (strain MAFF 303099)).